Here is a 297-residue protein sequence, read N- to C-terminus: Phosphatidylglycerol--prolipoprotein diacylglyceryl transferase (297 aa).

Helical transmembrane passes span 20–40, 57–77, 107–127, and 133–153; these read FITI…GLFI, EILP…YVIF, WEGG…IIFF, and IHLK…QSIG. Arg154 is a binding site for a 1,2-diacyl-sn-glycero-3-phospho-(1'-sn-glycerol). 3 helical membrane passes run 193–213, 225–245, and 266–286; these read PTFL…ILIF, GFIS…IEGL, and AQFI…FLRL.

The protein belongs to the Lgt family.

It is found in the cell inner membrane. The enzyme catalyses L-cysteinyl-[prolipoprotein] + a 1,2-diacyl-sn-glycero-3-phospho-(1'-sn-glycerol) = an S-1,2-diacyl-sn-glyceryl-L-cysteinyl-[prolipoprotein] + sn-glycerol 1-phosphate + H(+). It functions in the pathway protein modification; lipoprotein biosynthesis (diacylglyceryl transfer). In terms of biological role, catalyzes the transfer of the diacylglyceryl group from phosphatidylglycerol to the sulfhydryl group of the N-terminal cysteine of a prolipoprotein, the first step in the formation of mature lipoproteins. The chain is Phosphatidylglycerol--prolipoprotein diacylglyceryl transferase from Prochlorococcus marinus (strain MIT 9301).